Consider the following 287-residue polypeptide: 33 kDa chaperonin (287 aa).

Intrachain disulfides connect cysteine 233–cysteine 235 and cysteine 266–cysteine 269.

This sequence belongs to the HSP33 family. Post-translationally, under oxidizing conditions two disulfide bonds are formed involving the reactive cysteines. Under reducing conditions zinc is bound to the reactive cysteines and the protein is inactive.

It is found in the cytoplasm. Its function is as follows. Redox regulated molecular chaperone. Protects both thermally unfolding and oxidatively damaged proteins from irreversible aggregation. Plays an important role in the bacterial defense system toward oxidative stress. The polypeptide is 33 kDa chaperonin (Thermodesulfovibrio yellowstonii (strain ATCC 51303 / DSM 11347 / YP87)).